We begin with the raw amino-acid sequence, 79 residues long: MKLTCMMLVAVLFLTAWTFVTANVSRNGLENLFPEERHEMMNPEAAKLNNRDCVKAGTACGFPKPEPACCSSWCIFVCT.

The signal sequence occupies residues 1 to 22; it reads MKLTCMMLVAVLFLTAWTFVTA. The propeptide occupies 23–51; sequence NVSRNGLENLFPEERHEMMNPEAAKLNNR. Cystine bridges form between cysteine 53-cysteine 70, cysteine 60-cysteine 74, and cysteine 69-cysteine 78.

Belongs to the conotoxin O1 superfamily. Expressed by the venom duct.

The protein resides in the secreted. The protein is Conotoxin Leo-O1 of Conus leopardus (Leopard cone).